A 532-amino-acid polypeptide reads, in one-letter code: uncharacterized protein (532 aa).

The next 5 membrane-spanning stretches (helical) occupy residues 11–31 (YLSHGLVIHMIINGIVLALII), 51–71 (IEPFVLLVLMELISGIQKIFF), 126–146 (LIDILTYQSSHLFAFIGYTLW), 147–167 (ILYNSPITLTIYILLIPIIVF), and 231–253 (YVESINLAITLLTRFNLLIVLLI). In terms of domain architecture, ABC transporter spans 315-531 (ICINKLVYEY…MIIPMNNGII (217 aa)). 349–356 (GKSGSGKS) is a binding site for ATP.

The protein resides in the membrane. This is an uncharacterized protein from Acanthamoeba polyphaga mimivirus (APMV).